Reading from the N-terminus, the 266-residue chain is Phosphatidylglycerol--prolipoprotein diacylglyceryl transferase (266 aa).

The next 7 membrane-spanning stretches (helical) occupy residues 10-30 (VALA…LIGI), 56-76 (LVFW…VLFY), 92-112 (WKGG…VWWF), 120-140 (FFQL…AGRI), 171-191 (PSQL…LWLF), 199-219 (ASVS…VEFV), and 233-253 (WLTM…ALMV). A 1,2-diacyl-sn-glycero-3-phospho-(1'-sn-glycerol) is bound at residue Arg139.

Belongs to the Lgt family.

The protein resides in the cell inner membrane. The enzyme catalyses L-cysteinyl-[prolipoprotein] + a 1,2-diacyl-sn-glycero-3-phospho-(1'-sn-glycerol) = an S-1,2-diacyl-sn-glyceryl-L-cysteinyl-[prolipoprotein] + sn-glycerol 1-phosphate + H(+). Its pathway is protein modification; lipoprotein biosynthesis (diacylglyceryl transfer). In terms of biological role, catalyzes the transfer of the diacylglyceryl group from phosphatidylglycerol to the sulfhydryl group of the N-terminal cysteine of a prolipoprotein, the first step in the formation of mature lipoproteins. The protein is Phosphatidylglycerol--prolipoprotein diacylglyceryl transferase of Pseudomonas aeruginosa (strain LESB58).